The chain runs to 205 residues: Small ribosomal subunit protein uS7 (205 aa).

This sequence belongs to the universal ribosomal protein uS7 family. As to quaternary structure, part of the 30S ribosomal subunit.

Its function is as follows. One of the primary rRNA binding proteins, it binds directly to 16S rRNA where it nucleates assembly of the head domain of the 30S subunit. Is located at the subunit interface close to the decoding center. This Aeropyrum pernix (strain ATCC 700893 / DSM 11879 / JCM 9820 / NBRC 100138 / K1) protein is Small ribosomal subunit protein uS7.